A 407-amino-acid chain; its full sequence is 4-hydroxy-3-methylbut-2-en-1-yl diphosphate synthase (ferredoxin) (407 aa).

C312, C315, C346, and E353 together coordinate [4Fe-4S] cluster.

It belongs to the IspG family. It depends on [4Fe-4S] cluster as a cofactor.

It carries out the reaction (2E)-4-hydroxy-3-methylbut-2-enyl diphosphate + 2 oxidized [2Fe-2S]-[ferredoxin] + H2O = 2-C-methyl-D-erythritol 2,4-cyclic diphosphate + 2 reduced [2Fe-2S]-[ferredoxin] + H(+). The protein operates within isoprenoid biosynthesis; isopentenyl diphosphate biosynthesis via DXP pathway; isopentenyl diphosphate from 1-deoxy-D-xylulose 5-phosphate: step 5/6. In terms of biological role, converts 2C-methyl-D-erythritol 2,4-cyclodiphosphate (ME-2,4cPP) into 1-hydroxy-2-methyl-2-(E)-butenyl 4-diphosphate. This Synechococcus elongatus (strain ATCC 33912 / PCC 7942 / FACHB-805) (Anacystis nidulans R2) protein is 4-hydroxy-3-methylbut-2-en-1-yl diphosphate synthase (ferredoxin).